Here is a 304-residue protein sequence, read N- to C-terminus: MADEQQFIEDGLQRTQIDEFFAEELGRAGYGGMDVAKTPMGTQIVLKAEKPGMVIGKGGKNIRKITTELEDRFNLDDPQVDVQEVDEPDLNARIVADRLANALERGWYFRKAGHTTIDRIMESGALGAEIVLSGKVTGARSRVEKFNRGYVKHNGEPAEEIVDSGVGVAVMKLGTIGVRVKIIPPNAELPDDFEIYEDVDVEDYVADTDGESVEELLEGEPEDSETAEELDEDVAAGADDDSEADEEFVDEEIVEEDVEVPTDDDVEDVDVDELEEAVDEELDEDVEAEAEELMDEMDEEGDDE.

The 70-residue stretch at 17–86 (IDEFFAEELG…DPQVDVQEVD (70 aa)) folds into the KH type-2 domain. Residues 216 to 304 (LLEGEPEDSE…DEMDEEGDDE (89 aa)) are disordered.

The protein belongs to the universal ribosomal protein uS3 family. Part of the 30S ribosomal subunit.

Its function is as follows. Binds the lower part of the 30S subunit head. In Haloarcula marismortui (strain ATCC 43049 / DSM 3752 / JCM 8966 / VKM B-1809) (Halobacterium marismortui), this protein is Small ribosomal subunit protein uS3.